We begin with the raw amino-acid sequence, 162 residues long: Ribonuclease P protein component (162 aa).

The disordered stretch occupies residues 1–62 (MDEKDLATQP…GPPKAGGRLL (62 aa)). The span at 21–36 (GPHEDPRRQERAEAQA) shows a compositional bias: basic and acidic residues.

Belongs to the RnpA family. As to quaternary structure, consists of a catalytic RNA component (M1 or rnpB) and a protein subunit.

It carries out the reaction Endonucleolytic cleavage of RNA, removing 5'-extranucleotides from tRNA precursor.. In terms of biological role, RNaseP catalyzes the removal of the 5'-leader sequence from pre-tRNA to produce the mature 5'-terminus. It can also cleave other RNA substrates such as 4.5S RNA. The protein component plays an auxiliary but essential role in vivo by binding to the 5'-leader sequence and broadening the substrate specificity of the ribozyme. This is Ribonuclease P protein component from Thermus aquaticus.